The following is a 141-amino-acid chain: Hemoglobin subunit alpha (141 aa).

The Globin domain occupies 1–141; sequence VLSAADKTNV…VSTVLTSKYR (141 aa). A Phosphoserine modification is found at S3. K7 is modified (N6-succinyllysine). At T8 the chain carries Phosphothreonine. An N6-succinyllysine modification is found at K11. At K16 the chain carries N6-acetyllysine; alternate. At K16 the chain carries N6-succinyllysine; alternate. The residue at position 24 (Y24) is a Phosphotyrosine. A Phosphoserine modification is found at S35. At K40 the chain carries N6-succinyllysine. Position 49 is a phosphoserine (S49). An O2-binding site is contributed by H58. Residue H87 participates in heme b binding. S102 bears the Phosphoserine mark. At T108 the chain carries Phosphothreonine. Phosphoserine is present on residues S124 and S131. Phosphothreonine is present on residues T134 and T137. Residue S138 is modified to Phosphoserine.

This sequence belongs to the globin family. In terms of assembly, heterotetramer of two alpha chains and two beta chains. As to expression, red blood cells.

In terms of biological role, involved in oxygen transport from the lung to the various peripheral tissues. This is Hemoglobin subunit alpha from Tamiasciurus hudsonicus (American red squirrel).